The following is a 214-amino-acid chain: Large ribosomal subunit protein uL16 (214 aa).

R32 carries the post-translational modification Citrulline. K175 is covalently cross-linked (Glycyl lysine isopeptide (Lys-Gly) (interchain with G-Cter in SUMO2)). K188 is covalently cross-linked (Glycyl lysine isopeptide (Lys-Gly) (interchain with G-Cter in ubiquitin)).

This sequence belongs to the universal ribosomal protein uL16 family. Component of the large ribosomal subunit. Mature ribosomes consist of a small (40S) and a large (60S) subunit. The 40S subunit contains about 33 different proteins and 1 molecule of RNA (18S). The 60S subunit contains about 49 different proteins and 3 molecules of RNA (28S, 5.8S and 5S). Citrullinated by PADI4. In terms of processing, ufmylated by UFL1.

It localises to the cytoplasm. Component of the large ribosomal subunit. Plays a role in the formation of actively translating ribosomes. May play a role in the embryonic brain development. This Bos taurus (Bovine) protein is Large ribosomal subunit protein uL16.